A 210-amino-acid chain; its full sequence is Holliday junction resolvase RecU (210 aa).

Positions 93, 95, 108, and 127 each coordinate Mg(2+).

It belongs to the RecU family. It depends on Mg(2+) as a cofactor.

Its subcellular location is the cytoplasm. The catalysed reaction is Endonucleolytic cleavage at a junction such as a reciprocal single-stranded crossover between two homologous DNA duplexes (Holliday junction).. Its function is as follows. Endonuclease that resolves Holliday junction intermediates in genetic recombination. Cleaves mobile four-strand junctions by introducing symmetrical nicks in paired strands. Promotes annealing of linear ssDNA with homologous dsDNA. Required for DNA repair, homologous recombination and chromosome segregation. In Lactobacillus helveticus (strain DPC 4571), this protein is Holliday junction resolvase RecU.